A 187-amino-acid chain; its full sequence is Small ribosomal subunit protein uS7 (187 aa).

Belongs to the universal ribosomal protein uS7 family. As to quaternary structure, part of the 30S ribosomal subunit.

Its function is as follows. One of the primary rRNA binding proteins, it binds directly to 16S rRNA where it nucleates assembly of the head domain of the 30S subunit. Is located at the subunit interface close to the decoding center. The polypeptide is Small ribosomal subunit protein uS7 (Picrophilus torridus (strain ATCC 700027 / DSM 9790 / JCM 10055 / NBRC 100828 / KAW 2/3)).